The primary structure comprises 318 residues: NADH-ubiquinone oxidoreductase chain 1 (318 aa).

8 helical membrane passes run 2 to 22, 69 to 89, 100 to 120, 146 to 166, 171 to 191, 231 to 251, 253 to 273, and 285 to 305; these read FMIN…FLTL, LLFT…WLPL, LGVL…LWSG, LAII…TNLI, HMWL…STLA, IMMM…TPLV, GIYT…FLWI, and LMHL…MWHV.

The protein belongs to the complex I subunit 1 family. Core subunit of respiratory chain NADH dehydrogenase (Complex I) which is composed of 45 different subunits.

It localises to the mitochondrion inner membrane. The catalysed reaction is a ubiquinone + NADH + 5 H(+)(in) = a ubiquinol + NAD(+) + 4 H(+)(out). Its function is as follows. Core subunit of the mitochondrial membrane respiratory chain NADH dehydrogenase (Complex I) which catalyzes electron transfer from NADH through the respiratory chain, using ubiquinone as an electron acceptor. Essential for the catalytic activity and assembly of complex I. The polypeptide is NADH-ubiquinone oxidoreductase chain 1 (MT-ND1) (Myrmecophaga tridactyla (Giant anteater)).